The sequence spans 288 residues: Syntaxin-1B (288 aa).

The span at 1–13 (MKDRTQELRSAKD) shows a compositional bias: basic and acidic residues. Positions 1 to 20 (MKDRTQELRSAKDSDDEEEV) are disordered. Over 1–264 (MKDRTQELRS…KYQSKARRKK (264 aa)) the chain is Cytoplasmic. Residues Ser-10 and Ser-14 each carry the phosphoserine modification. Positions 29 to 104 (MDEFFEQVEE…IEQSIEQEEG (76 aa)) form a coiled coil. Positions 191 to 253 (LNEIETRHNE…ERAVSDTKKA (63 aa)) constitute a t-SNARE coiled-coil homology domain. A helical; Anchor for type IV membrane protein membrane pass occupies residues 265-288 (IMIIICCVVLGVVLASSIGGTLGL).

This sequence belongs to the syntaxin family. In terms of assembly, interacts with OTOF. Interacts with SYT6 and SYT8; the interaction is Ca(2+)-dependent. Phosphorylated by CK2.

The protein localises to the membrane. Its subcellular location is the nucleus. It is found in the cytoplasm. It localises to the cytoskeleton. The protein resides in the microtubule organizing center. The protein localises to the centrosome. Its subcellular location is the spindle. Potentially involved in docking of synaptic vesicles at presynaptic active zones. May mediate Ca(2+)-regulation of exocytosis acrosomal reaction in sperm. The chain is Syntaxin-1B (STX1B) from Homo sapiens (Human).